The primary structure comprises 118 residues: Small ribosomal subunit protein uS13 (118 aa).

Residues 94–118 (SLPVRGQRTKTNARTRKGPRKPIKK) are disordered.

It belongs to the universal ribosomal protein uS13 family. Part of the 30S ribosomal subunit. Forms a loose heterodimer with protein S19. Forms two bridges to the 50S subunit in the 70S ribosome.

Its function is as follows. Located at the top of the head of the 30S subunit, it contacts several helices of the 16S rRNA. In the 70S ribosome it contacts the 23S rRNA (bridge B1a) and protein L5 of the 50S subunit (bridge B1b), connecting the 2 subunits; these bridges are implicated in subunit movement. Contacts the tRNAs in the A and P-sites. The polypeptide is Small ribosomal subunit protein uS13 (Actinobacillus pleuropneumoniae serotype 5b (strain L20)).